The chain runs to 601 residues: Protein FREE1 (601 aa).

The interval 1-240 (MQQGDYNSYY…SGEYPAFEDS (240 aa)) is disordered. Pro residues predominate over residues 21–35 (TPNPNPNPNPSPPAP). 2 stretches are compositionally biased toward polar residues: residues 63–79 (DYSN…QNSE) and 125–155 (LSSY…QHQT). Residues 161-175 (APPPSSAPAPNPNPA) are compositionally biased toward pro residues. Residues 176 to 197 (PYSSSLYSAPPYSSGGSSIPPS) are compositionally biased toward low complexity. Positions 214 to 231 (NRSRSDLGSDLYGKRSDS) are enriched in basic and acidic residues. Ser-218 carries the post-translational modification Phosphoserine. The segment at 338-344 (LDGLRML) is nuclear export signal. The FYVE-type zinc finger occupies 455-515 (DEAVSKCTSC…VCDRCMAEVS (61 aa)). The Zn(2+) site is built by Cys-461, Cys-464, Cys-477, Cys-480, Cys-485, Cys-488, Cys-507, and Cys-510. Residues 527 to 552 (RNVSLQSHEDLARKLQEEMERNRKSS) are a coiled coil. 2 positions are modified to phosphoserine: Ser-530 and Ser-533. The segment at 542-561 (QEEMERNRKSSSGLREGSGR) is disordered.

In terms of assembly, part of the ESCRT-I complex. Interacts with VPS23A and VPS23B, but not with VPS28 or VPS37. Interacts with IRT1. Interacts with SH3P2. Interacts with SH3P3, but not with SH3P1. Interacts (via N-terminus) with PYL4 and PYR3. Interacts (via C-terminus) with SNRK2D/SNRK2.2, SNRK2I/SNRK2.3, ABF4 and ABI5. Interacts with SINAT1, SINAT2, SINAT3 and SINAT4. Interacts with SINAT5. Component of a phosphoinositide 3-kinase (PI3K) complex containing ATG6, SH3P2 and FREE1. In terms of processing, phosphorylated at Ser-530 and Ser-533 by SNRK2D/SNRK2.2 and SNRK2I/SNRK2.3 in response to abscisic acid (ABA). Phosphorylation is necessary for ABA-induced FREE1 nuclear import. Ubiquitinated by SINAT1, SINAT2, SINAT3 and SINAT4 for subsequent proteasomal degradation. Ubiquitous. Lowest expression in mature seeds.

It is found in the cytoplasm. Its subcellular location is the prevacuolar compartment membrane. It localises to the late endosome. The protein resides in the endosome. The protein localises to the multivesicular body. It is found in the nucleus. In terms of biological role, endosomal sorting complex required for transport (ESCRT) component regulating multivesicular body (MVB) protein sorting and plant growth. Required for the formation of intra-luminal vesicles (ILVs)in MVBs. Binds to phosphatidylinositol-3-phosphate (PI3P) and ubiquitin. Controls IRT1 recycling to the plasma membrane and impacts the polar delivery of this transporter to the outer plasma membrane domain. Regulates ubiquitin-dependent membrane protein degradation, vacuolar transport, autophagy, and vacuole biogenesis. ESCRT component that binds ubiquitin and regulates vacuolar sorting of proteins. Attenuates abscisic acid (ABA) signaling through RSL1-triggered degradation of the ABA receptors PYR1 and PYL4. Interacts with PYL4 and PYR1, and delivers the ubiquitinated ABA receptors as cargo to the vacuolar degradation pathway. In response to ABA, is phosphorylated by SnRK2 kinases which mediate FREE1 nuclear import. In the nucleus, interacts with the ABA-responsive transcription factors ABF4 and ABI5 to reduce their ability to bind to their cis-regulatory sequences of downstream genes, thus leading to transcriptional inhibition of ABA signaling pathway. Negatively regulates salt stress tolerance via a negative feedback loop involving ABA signaling pathway. This is Protein FREE1 from Arabidopsis thaliana (Mouse-ear cress).